The primary structure comprises 430 residues: Serine--tRNA ligase (430 aa).

231–233 (TSE) lines the L-serine pocket. 262–264 (RSE) lines the ATP pocket. Glu-285 provides a ligand contact to L-serine. 349–352 (EISS) provides a ligand contact to ATP. An L-serine-binding site is contributed by Ser-385.

Belongs to the class-II aminoacyl-tRNA synthetase family. Type-1 seryl-tRNA synthetase subfamily. As to quaternary structure, homodimer. The tRNA molecule binds across the dimer.

Its subcellular location is the cytoplasm. The catalysed reaction is tRNA(Ser) + L-serine + ATP = L-seryl-tRNA(Ser) + AMP + diphosphate + H(+). The enzyme catalyses tRNA(Sec) + L-serine + ATP = L-seryl-tRNA(Sec) + AMP + diphosphate + H(+). The protein operates within aminoacyl-tRNA biosynthesis; selenocysteinyl-tRNA(Sec) biosynthesis; L-seryl-tRNA(Sec) from L-serine and tRNA(Sec): step 1/1. Its function is as follows. Catalyzes the attachment of serine to tRNA(Ser). Is also able to aminoacylate tRNA(Sec) with serine, to form the misacylated tRNA L-seryl-tRNA(Sec), which will be further converted into selenocysteinyl-tRNA(Sec). The sequence is that of Serine--tRNA ligase from Roseobacter denitrificans (strain ATCC 33942 / OCh 114) (Erythrobacter sp. (strain OCh 114)).